Consider the following 627-residue polypeptide: Plastin-3 (627 aa).

EF-hand domains are found at residues 8-43 and 48-83; these read EELEELREAFGKVDLNGNGFICDHELHDLFKEANLP and KVREIIQKLMEEGDKNKDNMISFDEFVSIFQELKSG. Residues D21, N23, N25, E32, D61, N63, D65, M67, and E72 each coordinate Ca(2+). 2 actin-binding regions span residues 105–378 and 379–624; these read TSEL…ALTK and PENQ…GRGM. 4 consecutive Calponin-homology (CH) domains span residues 119–235, 263–374, 393–503, and 515–624; these read EEER…KIGL, LSPE…NKYP, TREE…RRYT, and KVND…GRGM.

The protein localises to the cytoplasm. Functionally, actin-bundling protein. The polypeptide is Plastin-3 (pls3) (Danio rerio (Zebrafish)).